We begin with the raw amino-acid sequence, 1132 residues long: Cytospin-A (1132 aa).

Residues methionine 1–lysine 166 are disordered. Low complexity-rich tracts occupy residues serine 73–serine 109 and serine 119–serine 129. The segment covering serine 150–serine 159 has biased composition (basic and acidic residues). A coiled-coil region spans residues aspartate 226–glutamine 268. The tract at residues alanine 301–glutamate 381 is disordered. The segment covering serine 333–aspartate 343 has biased composition (polar residues). Low complexity predominate over residues alanine 348–glycine 377. Coiled coils occupy residues alanine 385–leucine 440 and arginine 478–valine 798. 2 disordered regions span residues threonine 869–valine 895 and serine 939–proline 1016. Positions alanine 875–threonine 889 are enriched in pro residues. The segment covering glutamine 946–arginine 961 has biased composition (polar residues). Over residues arginine 962–serine 972 the composition is skewed to basic and acidic residues. Low complexity predominate over residues alanine 979–serine 1000. One can recognise a Calponin-homology (CH) domain in the interval glycine 1026 to glutamate 1131.

This sequence belongs to the cytospin-A family. As to quaternary structure, may interact with both microtubules and actin cytoskeleton.

The protein resides in the cytoplasm. Its subcellular location is the cytoskeleton. It localises to the spindle. It is found in the cell junction. The protein localises to the gap junction. Involved in cytokinesis and spindle organization. May play a role in actin cytoskeleton organization and microtubule stabilization and hence required for proper cell adhesion and migration. In Danio rerio (Zebrafish), this protein is Cytospin-A (specc1la).